The sequence spans 339 residues: D-erythrose-4-phosphate dehydrogenase (339 aa).

NAD(+)-binding positions include 12–13 (RI) and R81. Residues 154–156 (SCT), R200, 213–214 (TK), and R236 contribute to the substrate site. The Nucleophile role is filled by C155. An NAD(+)-binding site is contributed by N318.

This sequence belongs to the glyceraldehyde-3-phosphate dehydrogenase family. Epd subfamily. As to quaternary structure, homotetramer.

The protein localises to the cytoplasm. The enzyme catalyses D-erythrose 4-phosphate + NAD(+) + H2O = 4-phospho-D-erythronate + NADH + 2 H(+). It participates in cofactor biosynthesis; pyridoxine 5'-phosphate biosynthesis; pyridoxine 5'-phosphate from D-erythrose 4-phosphate: step 1/5. Its function is as follows. Catalyzes the NAD-dependent conversion of D-erythrose 4-phosphate to 4-phosphoerythronate. This chain is D-erythrose-4-phosphate dehydrogenase, found in Escherichia coli (strain UTI89 / UPEC).